We begin with the raw amino-acid sequence, 104 residues long: Increased recombination centers protein 13 (104 aa).

A helical transmembrane segment spans residues 63 to 83 (LVHLFSYVFFLFLLKICVDVL).

The protein resides in the membrane. In terms of biological role, may be involved in a pathway contributing to genomic integrity. The chain is Increased recombination centers protein 13 (IRC13) from Saccharomyces cerevisiae (strain ATCC 204508 / S288c) (Baker's yeast).